An 862-amino-acid chain; its full sequence is Phosphatidic acid phosphohydrolase 1 (862 aa).

Residues 19 to 104 form an N-LIP region; that stretch reads NPATLSGAID…VPDELLVSPV (86 aa). 2 disordered regions span residues 104–183 and 300–341; these read VMSA…SVEE and GSTL…AGSG. Polar residues predominate over residues 105–117; it reads MSATSSPPQSPET. Residues S110 and S114 each carry the phosphoserine modification. Basic and acidic residues predominate over residues 132-143; sequence NENKKKEKKVLE. Low complexity-rich tracts occupy residues 161–179 and 300–313; these read SETT…TPPD and GSTL…PSGS. S168 carries the post-translational modification Phosphoserine. Residues 398–402 carry the DXDXT motif motif; sequence DIDGT. K496 is subject to N6-acetyllysine. Phosphoserine is present on S511. S602 is subject to Phosphoserine; by CDC28. Positions 648 to 732 are disordered; sequence SDISNDDSDN…TPNKSTMSKG (85 aa). Positions 651 to 663 are enriched in acidic residues; it reads SNDDSDNIDEDTD. Composition is skewed to polar residues over residues 664–679 and 687–699; these read VSQQ…NSVK and PQRN…NNNE. Low complexity predominate over residues 710–730; that stretch reads ASDLVSSHSSSGSTPNKSTMS. T723 is modified (phosphothreonine; by CDC28). Phosphoserine; by CDC28 is present on S744. Phosphoserine occurs at positions 748, 773, and 774. The segment at 757–780 is disordered; that stretch reads MDDEDSNYNRTKSRRASSAAATSI. N6-acetyllysine is present on K801. The disordered stretch occupies residues 807–862; that stretch reads DVHSLGNSDTESRREQSVNETGRNQLPHNSMDDKDLDSRVSDEFDDDEFDEDEFED. Phosphoserine occurs at positions 810 and 814. Position 816 is a phosphothreonine (T816). Residues 824-834 show a composition bias toward polar residues; sequence VNETGRNQLPH. Residues 836-848 are compositionally biased toward basic and acidic residues; that stretch reads SMDDKDLDSRVSD. S844 and S847 each carry phosphoserine. Positions 849 to 862 are enriched in acidic residues; sequence EFDDDEFDEDEFED.

The protein belongs to the lipin family. It depends on Mg(2+) as a cofactor. In terms of processing, acetylation at Lys-496 and Lys-801 by ESA1 promotes synthesis of diacylglycerol. Post-translationally, phosphorylated by CDC28 at the onset of mitosis, and dephosphorylated by the NEM1-SPO7 complex. Phosphorylation regulates recruitment on promoters of lipid biosynthetic enzymes.

It is found in the cytoplasm. The protein localises to the nucleus membrane. It localises to the endoplasmic reticulum membrane. It catalyses the reaction a 1,2-diacyl-sn-glycero-3-phosphate + H2O = a 1,2-diacyl-sn-glycerol + phosphate. Phenylglyoxal and propranolol inhibit activity in dose-dependent manners with IC(50) values of 1.3 mM and 0.2 mM, respectively. Sertraline inhibits activity in a dose-dependent manner with an IC(50) value of 85 uM; the inhibitory effects of sertraline and propranolol are additive. In terms of biological role, mg(2+)-dependent phosphatidate (PA) phosphatase which catalyzes the dephosphorylation of PA to yield diacylglycerol. Required for de novo lipid synthesis and formation of lipid droplets. Controls transcription of phospholipid biosynthetic genes and nuclear structure by regulating the amount of membrane present at the nuclear envelope. Involved in plasmid maintenance, in respiration and in cell proliferation. The polypeptide is Phosphatidic acid phosphohydrolase 1 (PAH1) (Saccharomyces cerevisiae (strain ATCC 204508 / S288c) (Baker's yeast)).